The following is a 192-amino-acid chain: E3 ubiquitin-protein ligase RNF183 (192 aa).

At 1-161 (MAEQQGRELE…RECFRNPQFR (161 aa)) the chain is on the cytoplasmic side. Residues 13–60 (CPVCWNPFNNTFHTPKMLDCCHSFCVECLAHLSLVTPARRRLLCPLCR) form an RING-type zinc finger. The chain crosses the membrane as a helical; Anchor for type IV membrane protein span at residues 162 to 182 (IFAYLMAVILSVTLLLIFSIF). Topologically, residues 183-192 (WTKQFLWGVG) are lumenal.

In terms of assembly, interacts with FATE1. Interacts with SEC16A. Interacts with BCL2L1. In terms of processing, autoubiquitinated (in vitro). As to expression, kidney and testis.

The protein resides in the endoplasmic reticulum membrane. The protein localises to the endoplasmic reticulum. It localises to the golgi apparatus. It is found in the cis-Golgi network membrane. Its subcellular location is the lysosome membrane. It catalyses the reaction S-ubiquitinyl-[E2 ubiquitin-conjugating enzyme]-L-cysteine + [acceptor protein]-L-lysine = [E2 ubiquitin-conjugating enzyme]-L-cysteine + N(6)-ubiquitinyl-[acceptor protein]-L-lysine.. Its pathway is protein modification; protein ubiquitination. Functionally, acts as an E3 ubiquitin ligase catalyzing the covalent attachment of ubiquitin moieties onto substrate proteins. Triggers apoptosis in response to prolonged ER stress by mediating the polyubiquitination and subsequent proteasomal degradation of BCL2L1. May collaborate with FATE1 to restrain BIK protein levels thus regulating apoptotic signaling. In Homo sapiens (Human), this protein is E3 ubiquitin-protein ligase RNF183 (RNF183).